Reading from the N-terminus, the 669-residue chain is Very long-chain fatty acid transport protein (669 aa).

The Cytoplasmic portion of the chain corresponds to 1–5 (MSPIQ). Residues 6 to 26 (VVVFALSRIFLLLFRLIKLII) form a helical membrane-spanning segment. Residues 27–148 (TPIQKSLGYL…YVAIDCTNKP (122 aa)) are Extracellular-facing. A helical transmembrane segment spans residues 149–169 (LFVFLWLSLWNIGAIPAFLNY). Residues 170–270 (NTKGTPLVHS…TGLPKSAIMS (101 aa)) are Cytoplasmic-facing. 256-267 (YTSGTTGLPKSA) lines the ATP pocket. The stretch at 271 to 339 (WRKSSVGCQV…FWKQVYLTGA (69 aa)) is an intramembrane region. Over 340-669 (THIQYVGEVC…EAIDAQTIKL (330 aa)) the chain is Cytoplasmic. Residues 501 to 551 (DAWYRCGDLLKADEYGLWYFLDRMGDTFRWKSENVSTTEVEDQLTASNKEQ) carry the FACS motif. A C-terminal peroxisome targeting signal (PTS1) motif is present at residues 667 to 669 (IKL).

The protein belongs to the ATP-dependent AMP-binding enzyme family. In terms of assembly, interacts with fatty acyl-CoA synthetases FAA1 and FAA4.

The protein localises to the lipid droplet. The protein resides in the cell membrane. It is found in the peroxisome membrane. It localises to the peroxisome. The enzyme catalyses a very long-chain fatty acid + ATP + CoA = a very long-chain fatty acyl-CoA + AMP + diphosphate. It carries out the reaction tetracosanoate + ATP + CoA = tetracosanoyl-CoA + AMP + diphosphate. Its function is as follows. Acyl-CoA synthetase required for both the import of long chain fatty acids (LCFAs) (C14-C18) and the activation very long chain fatty acids (VLCFAs) (C20-C26) by esterification of the fatty acids into metabolically active CoA-thioesters for subsequent degradation or incorporation into phospholipids. The transport and fatty acyl-CoA synthetase activities are genetically separable and are thus independent activities. Esterifies VLCFAs in the peroxisome matrix. The VLCFAs are actively transported into peroxisomes by a PXA1-PXA2 heterodimeric transporter in the peroxisomal membrane. The sequence is that of Very long-chain fatty acid transport protein (FAT1) from Saccharomyces cerevisiae (strain ATCC 204508 / S288c) (Baker's yeast).